Here is a 505-residue protein sequence, read N- to C-terminus: Maturase K (505 aa).

This sequence belongs to the intron maturase 2 family. MatK subfamily.

Its subcellular location is the plastid. It localises to the chloroplast. Its function is as follows. Usually encoded in the trnK tRNA gene intron. Probably assists in splicing its own and other chloroplast group II introns. This chain is Maturase K, found in Sciadopitys verticillata (Japanese umbrella-pine).